The sequence spans 402 residues: Protein rds1 (402 aa).

Functionally, may have a function in stress-related responses of the cell. This chain is Protein rds1 (rds1), found in Schizosaccharomyces pombe (strain 972 / ATCC 24843) (Fission yeast).